The sequence spans 480 residues: Iroquois-class homeodomain protein IRX-1 (480 aa).

Positions 127–189 (DPGRPKNATR…NARRRLKKEN (63 aa)) form a DNA-binding region, homeobox; TALE-type. 3 disordered regions span residues 190–285 (KVTW…LGLV), 318–354 (SLAE…PLQH), and 401–480 (PHGP…LPSA). The segment covering 210–232 (TEGDPEKAEDDEEIDLESIDIDQ) has biased composition (acidic residues). Serine 241 carries the phosphoserine modification. A compositionally biased stretch (low complexity) spans 254-263 (ARVAPPASAR). A compositionally biased stretch (polar residues) spans 264 to 280 (DQSSPLSAAETLKSQDS). Residues 339–351 (SHASAHGPPSGSP) are compositionally biased toward low complexity.

It belongs to the TALE/IRO homeobox family. Expressed in specific and overlapping patterns with Irx1 and Irx2 in the developing and adult metanephric kidney. In the adult metanephros, renal expression is found in the loop of Henle in the S3 proximal tubule segment and in the thick ascending limb (TAL) of the distal tubule.

It localises to the nucleus. This chain is Iroquois-class homeodomain protein IRX-1 (Irx1), found in Mus musculus (Mouse).